The following is a 585-amino-acid chain: Serine/threonine-protein kinase PknI (585 aa).

The Cytoplasmic portion of the chain corresponds to 1–349 (MALASGVTFA…ASPTRRRPRR (349 aa)). The Protein kinase domain occupies 12-252 (YTVVRMLGCS…SCREFADAMN (241 aa)). ATP is bound by residues 18 to 26 (LGCSAMGEV) and K41. Residues K41, D90, and V92 each contribute to the ADP site. The active-site Proton acceptor is the D137. Residues 350-370 (ILVGAVAVLLLAGLFAVGIVI) form a helical membrane-spanning segment. At 371–585 (GRKTNTTATE…PTTTAPGPGR (215 aa)) the chain is on the extracellular side. The interval 546 to 585 (SGDLPPAVTVPDPATIPDTPDTTSTATLTPPTTTAPGPGR) is disordered. Low complexity predominate over residues 554-585 (TVPDPATIPDTPDTTSTATLTPPTTTAPGPGR).

It belongs to the protein kinase superfamily. Ser/Thr protein kinase family. Requires Mn(2+) as cofactor. In terms of processing, autophosphorylated at serine and threonine residues.

It localises to the cytoplasm. It is found in the cell membrane. The enzyme catalyses L-seryl-[protein] + ATP = O-phospho-L-seryl-[protein] + ADP + H(+). It carries out the reaction L-threonyl-[protein] + ATP = O-phospho-L-threonyl-[protein] + ADP + H(+). Functionally, plays an important role in slowing down the growth of mycobacteria within the infected host. This Mycobacterium bovis (strain ATCC BAA-935 / AF2122/97) protein is Serine/threonine-protein kinase PknI (pknI).